The primary structure comprises 441 residues: Trigger factor (441 aa).

The PPIase FKBP-type domain maps to 161–246 (GDMVTVDFQG…VKDVKERILA (86 aa)).

It belongs to the FKBP-type PPIase family. Tig subfamily.

The protein localises to the cytoplasm. It carries out the reaction [protein]-peptidylproline (omega=180) = [protein]-peptidylproline (omega=0). Functionally, involved in protein export. Acts as a chaperone by maintaining the newly synthesized protein in an open conformation. Functions as a peptidyl-prolyl cis-trans isomerase. The protein is Trigger factor of Desulfotalea psychrophila (strain LSv54 / DSM 12343).